Here is a 491-residue protein sequence, read N- to C-terminus: Katanin p60 ATPase-containing subunit A1 (491 aa).

An interaction with KATNB1 region spans residues 1–29 (MSLQMIVENVKLAREYALLGNYDSAMVYY). An interaction with dynein and NDEL1 region spans residues 1-75 (MSLQMIVENV…VKDIMKTLES (75 aa)). Positions 1–185 (MSLQMIVENV…EPEANKFDGT (185 aa)) are interaction with microtubules; sufficient for microtubule severing activity. Residue serine 42 is modified to Phosphoserine; by DYRK2. The tract at residues 101–182 (PVPVERRPLP…AVTEPEANKF (82 aa)) is disordered. The segment covering 145–169 (HNDRGKAVRSREKKEQSKGREEKNK) has biased composition (basic and acidic residues). 249-256 (GPPGTGKT) provides a ligand contact to ATP.

Belongs to the AAA ATPase family. Katanin p60 subunit A1 subfamily. In terms of assembly, can homooligomerize into hexameric rings, which may be promoted by interaction with microtubules. Interacts with KATNB1, which may serve as a targeting subunit. Interacts with ASPM; the katanin complex formation KATNA1:KATNB1 is required for the association of ASPM. Interacts with dynein and NDEL1. Associates with the E3 ligase complex containing DYRK2, EDD/UBR5, DDB1 and DCAF1 proteins (EDVP complex). Interacts with KLHL42 (via the kelch domains). Interacts with CUL3; the interaction is enhanced by KLHL42. Interacts with KATNB1 and KATNBL1. Interacts with CAMSAP2 and CAMSAP3; leading to regulate the length of CAMSAP-decorated microtubule stretches. In terms of processing, phosphorylation by DYRK2 triggers ubiquitination and subsequent degradation. Ubiquitinated by the BCR(KLHL42) E3 ubiquitin ligase complex, leading to its proteasomal degradation. Ubiquitinated by the EDVP E3 ligase complex and subsequently targeted for proteasomal degradation.

The protein resides in the cytoplasm. It localises to the midbody. It is found in the cytoskeleton. Its subcellular location is the microtubule organizing center. The protein localises to the centrosome. The protein resides in the spindle pole. It localises to the spindle. It catalyses the reaction n ATP + n H2O + a microtubule = n ADP + n phosphate + (n+1) alpha/beta tubulin heterodimers.. Its activity is regulated as follows. ATPase activity is stimulated by microtubules, which promote homooligomerization. ATP-dependent microtubule severing is stimulated by interaction with KATNB1. In terms of biological role, catalytic subunit of a complex which severs microtubules in an ATP-dependent manner. Microtubule severing may promote rapid reorganization of cellular microtubule arrays and the release of microtubules from the centrosome following nucleation. Microtubule release from the mitotic spindle poles may allow depolymerization of the microtubule end proximal to the spindle pole, leading to poleward microtubule flux and poleward motion of chromosome. The function in regulating microtubule dynamics at spindle poles seems to depend on the association of the katanin KATNA1:KATNB1 complex with ASPM which recruits it to microtubules. Reversely KATNA1:KATNB1 can enhance ASPM blocking activity on microtubule minus-end growth. Microtubule release within the cell body of neurons may be required for their transport into neuronal processes by microtubule-dependent motor proteins. This transport is required for axonal growth. The chain is Katanin p60 ATPase-containing subunit A1 (Katna1) from Mus musculus (Mouse).